The chain runs to 394 residues: MTHFTVSCLLVALFLCQSLVHAAYNGYYGYSPAAAPYPAEEPQNIMNPVDSCWRLKSDWDVNREDLADCAVGFGSSTLGGKKGNIYVVTNPYDNAQNPHPGSLRYGVIQAKPLWITFAKDMVITLANELMVNSYKTIDGRGAKVEIAYGPCITIQDVTNVIVHGISIHDCKPGKSGKVRSSPTHVGHRKGSDGDAITIFGSSNVWIDHCYLASCTDGLIDVIHASTAITISNNYFTQHDKVMLLGHNDNFVKDVKMKVTVAFNHFGPGLVERMPRVRRGYAHVANNRYDKWIMYAIGGSADPTIFSEGNYFIASDKSYSKEVTKREVKGGWNNWRWRTSNDVFKNGAFFVPSGYGSIPLPYSSAQRFTVAPGNLVPSLTADAGPLNCNRNGPCY.

Residues 1 to 22 (MTHFTVSCLLVALFLCQSLVHA) form the signal peptide. Positions 192, 216, and 220 each coordinate Ca(2+). Residue Arg-272 is part of the active site.

This sequence belongs to the polysaccharide lyase 1 family. Ca(2+) is required as a cofactor.

The enzyme catalyses Eliminative cleavage of (1-&gt;4)-alpha-D-galacturonan to give oligosaccharides with 4-deoxy-alpha-D-galact-4-enuronosyl groups at their non-reducing ends.. Its pathway is glycan metabolism; pectin degradation; 2-dehydro-3-deoxy-D-gluconate from pectin: step 2/5. The polypeptide is Putative pectate lyase 17 (Arabidopsis thaliana (Mouse-ear cress)).